The chain runs to 469 residues: Glutamate--tRNA ligase 1 (469 aa).

The 'HIGH' region signature appears at 9 to 19 (PSPTGYLHVGG). Positions 98, 100, 125, and 127 each coordinate Zn(2+). The short motif at 236–240 (RLSKR) is the 'KMSKS' region element. Lys239 lines the ATP pocket.

It belongs to the class-I aminoacyl-tRNA synthetase family. Glutamate--tRNA ligase type 1 subfamily. In terms of assembly, monomer. The cofactor is Zn(2+).

It localises to the cytoplasm. The enzyme catalyses tRNA(Glu) + L-glutamate + ATP = L-glutamyl-tRNA(Glu) + AMP + diphosphate. Its function is as follows. Catalyzes the attachment of glutamate to tRNA(Glu) in a two-step reaction: glutamate is first activated by ATP to form Glu-AMP and then transferred to the acceptor end of tRNA(Glu). In Nitrosococcus oceani (strain ATCC 19707 / BCRC 17464 / JCM 30415 / NCIMB 11848 / C-107), this protein is Glutamate--tRNA ligase 1.